The primary structure comprises 524 residues: Peptide chain release factor 3 (524 aa).

The tr-type G domain occupies A11–G278. Residues S20–T27, D88–H92, and N142–D145 each bind GTP.

The protein belongs to the TRAFAC class translation factor GTPase superfamily. Classic translation factor GTPase family. PrfC subfamily.

The protein localises to the cytoplasm. Increases the formation of ribosomal termination complexes and stimulates activities of RF-1 and RF-2. It binds guanine nucleotides and has strong preference for UGA stop codons. It may interact directly with the ribosome. The stimulation of RF-1 and RF-2 is significantly reduced by GTP and GDP, but not by GMP. The sequence is that of Peptide chain release factor 3 from Lacticaseibacillus paracasei (strain ATCC 334 / BCRC 17002 / CCUG 31169 / CIP 107868 / KCTC 3260 / NRRL B-441) (Lactobacillus paracasei).